The primary structure comprises 804 residues: Leucine--tRNA ligase (804 aa).

Positions 39–50 (PFPSGKGLHVGH) match the 'HIGH' region motif. Positions 573–577 (KMSKS) match the 'KMSKS' region motif. Lys576 lines the ATP pocket.

The protein belongs to the class-I aminoacyl-tRNA synthetase family.

It is found in the cytoplasm. The enzyme catalyses tRNA(Leu) + L-leucine + ATP = L-leucyl-tRNA(Leu) + AMP + diphosphate. The sequence is that of Leucine--tRNA ligase from Lactobacillus helveticus (strain DPC 4571).